The primary structure comprises 55 residues: Large ribosomal subunit protein bL33 (55 aa).

Residues 1 to 11 (MAKSGRDKIKL) are compositionally biased toward basic and acidic residues. The tract at residues 1 to 28 (MAKSGRDKIKLESTAGTGHFYTTTKNKR) is disordered. A compositionally biased stretch (polar residues) spans 14 to 24 (TAGTGHFYTTT).

It belongs to the bacterial ribosomal protein bL33 family.

The chain is Large ribosomal subunit protein bL33 from Janthinobacterium sp. (strain Marseille) (Minibacterium massiliensis).